The chain runs to 633 residues: DNA mismatch repair protein MutL (633 aa).

This sequence belongs to the DNA mismatch repair MutL/HexB family.

In terms of biological role, this protein is involved in the repair of mismatches in DNA. It is required for dam-dependent methyl-directed DNA mismatch repair. May act as a 'molecular matchmaker', a protein that promotes the formation of a stable complex between two or more DNA-binding proteins in an ATP-dependent manner without itself being part of a final effector complex. The polypeptide is DNA mismatch repair protein MutL (Bacillus pumilus (strain SAFR-032)).